We begin with the raw amino-acid sequence, 135 residues long: UPF0251 protein Hore_18270 (135 aa).

This sequence belongs to the UPF0251 family.

The sequence is that of UPF0251 protein Hore_18270 from Halothermothrix orenii (strain H 168 / OCM 544 / DSM 9562).